A 470-amino-acid polypeptide reads, in one-letter code: Sugar transporter ESL1 (470 aa).

An Essential for the localization to the vacuole membrane motif is present at residues 10-16 (LEAGLLL). 12 helical membrane passes run 28–48 (ITAVVLFSTFVSVCGSFCFGC), 68–88 (VAQYSMFGSIMTFGGMIGAIF), 99–119 (KGTMWFAQIFCIFGWVAVALA), 130–150 (LSTGFAVGLLSYVIPVYIAEI), 157–177 (GAFVFANQLMQSCGLSLFYVI), 186–206 (LALIGLIPCALQVVTLFFIPE), 268–288 (VVIGVGLMLLQQLSGSSGLMY), 303–323 (IGSMILAVIMIPKALLGLILV), 332–352 (LLASTGGMCFFSLLLSFSFCF), 368–388 (IGVVGFISSFAVGMGGLPWII), 404–424 (LVTLANWSFGWIVAFAYNFML), and 430–450 (GTFLIFFTICGAGIVFIYAMV).

Belongs to the major facilitator superfamily. Sugar transporter (TC 2.A.1.1) family. In terms of tissue distribution, expressed in both shoots and roots. In roots, strongly expressed in pericycle and xylem parenchyma cells, and to a lesser extent in the root endodermis. In flowers, expressed in sepals.

The protein localises to the vacuole membrane. The protein resides in the vesicle. Its function is as follows. Sugar transporter. Transports monosaccharides across the vacuolar membrane independently from a proton gradient. May function coordinately with the vacuolar invertase to regulate osmotic pressure by affecting the accumulation of sugar in the cells under abiotic stress conditions. In Arabidopsis thaliana (Mouse-ear cress), this protein is Sugar transporter ESL1.